A 622-amino-acid chain; its full sequence is Cilia- and flagella-associated protein 206 (622 aa).

Residues 570-592 are disordered; that stretch reads SQVYPPKDTSTQSMREDSTGVPR.

This sequence belongs to the CFAP206 family.

Its subcellular location is the cytoplasm. It localises to the cytoskeleton. It is found in the cilium axoneme. The protein resides in the cilium basal body. Its function is as follows. Essential for sperm motility and is involved in the regulation of the beating frequency of motile cilia on the epithelial cells of the respiratory tract. Required for the establishment of radial spokes in sperm flagella. This is Cilia- and flagella-associated protein 206 from Homo sapiens (Human).